Here is a 204-residue protein sequence, read N- to C-terminus: Neurensin-2 (204 aa).

A run of 2 helical transmembrane segments spans residues 66-86 (LSSGTLLLLLGVAALTTGYAV) and 122-142 (LCVAAGVLLAICLFWAMIGWL). Positions 178-204 (SGQSWFSPPASPFGQSSVQTIQPKRDS) are disordered. A compositionally biased stretch (polar residues) spans 190–204 (FGQSSVQTIQPKRDS).

The protein belongs to the VMP family.

The protein resides in the membrane. Functionally, may play a role in maintenance and/or transport of vesicles. The polypeptide is Neurensin-2 (NRSN2) (Homo sapiens (Human)).